Reading from the N-terminus, the 560-residue chain is Glucose-6-phosphate isomerase, cytosolic (560 aa).

A2 is subject to N-acetylalanine. The active-site Proton donor is the E361. Active-site residues include H392 and K517.

It belongs to the GPI family. Homodimer.

It is found in the cytoplasm. It catalyses the reaction alpha-D-glucose 6-phosphate = beta-D-fructose 6-phosphate. It functions in the pathway carbohydrate degradation; glycolysis; D-glyceraldehyde 3-phosphate and glycerone phosphate from D-glucose: step 2/4. The chain is Glucose-6-phosphate isomerase, cytosolic (PGIC) from Arabidopsis lyrata subsp. petraea (Northern rock-cress).